Consider the following 518-residue polypeptide: Probable portal protein (518 aa).

The interval 492 to 518 (KALQANGVTHVEPDEEDDDEPNATGTD) is disordered.

Belongs to the siphoviridae portal protein family. As to quaternary structure, homododecamer. Interacts with the terminase complex composed of two small and one large terminase subunits.

Its subcellular location is the virion. Functionally, forms the portal vertex of the capsid. This portal plays critical roles in head assembly, genome packaging, neck/tail attachment, and genome ejection. The portal protein multimerizes as a single ring-shaped homododecamer arranged around a central channel. Binds to the terminase subunits to form the packaging machine. This chain is Probable portal protein, found in Vreelandella aquamarina (Bacteriophage phiHAP-1).